A 198-amino-acid polypeptide reads, in one-letter code: MMVSTARAVVCLSLCLCVCQVRGSHIPARMNKTIQNLLQHYNISNKDRFNGKPVFPKEPLSGRMETKMLFMGGVLETYEKLIGQMLEQLPNTTPPTAGSREGLNSAAPEVSVRTDLNYILKKVQELRTNRFKEQSKLLQGLHDLGDIKMNNFIIQSKALWELQWMYEEASSLSNNTKMQRRRRRRRRQARKVKTPTRA.

The signal sequence occupies residues 1-23; the sequence is MMVSTARAVVCLSLCLCVCQVRG. Residues asparagine 31, asparagine 42, and asparagine 174 are each glycosylated (N-linked (GlcNAc...) asparagine). Positions 173-198 are disordered; that stretch reads SNNTKMQRRRRRRRRQARKVKTPTRA. Over residues 178–198 the composition is skewed to basic residues; sequence MQRRRRRRRRQARKVKTPTRA.

The protein belongs to the type II (or gamma) interferon family. In terms of assembly, homodimer.

Its subcellular location is the secreted. In terms of biological role, cytokine which binds to interferon gamma receptor 1 (ifngr1). Also binds with lower affinity to interferon gamma receptor 1-like (ifngr1l). Has activating effects on macrophages and neutrophils. This Paralichthys olivaceus (Bastard halibut) protein is Interferon gamma.